The primary structure comprises 168 residues: PTS system glucose-specific EIIA component (168 aa).

The region spanning 38–142 is the PTS EIIA type-1 domain; sequence DEVFSNKIVG…STLTPVIISN (105 aa). Residues His-75 and His-90 each coordinate Zn(2+). The active-site Tele-phosphohistidine intermediate; for EIIA activity is His-90. A Phosphohistidine; by HPr modification is found at His-90.

Zn(2+) is required as a cofactor.

The protein resides in the cytoplasm. Functionally, the phosphoenolpyruvate-dependent sugar phosphotransferase system (sugar PTS), a major carbohydrate active transport system, catalyzes the phosphorylation of incoming sugar substrates concomitantly with their translocation across the cell membrane. The enzyme II complex composed of PtsG and Crr is involved in glucose transport. The chain is PTS system glucose-specific EIIA component (crr) from Buchnera aphidicola subsp. Baizongia pistaciae (strain Bp).